A 477-amino-acid chain; its full sequence is 3-isopropylmalate dehydratase large subunit 1 (477 aa).

[4Fe-4S] cluster contacts are provided by Cys357, Cys417, and Cys420.

This sequence belongs to the aconitase/IPM isomerase family. LeuC type 1 subfamily. As to quaternary structure, heterodimer of LeuC and LeuD. The cofactor is [4Fe-4S] cluster.

It carries out the reaction (2R,3S)-3-isopropylmalate = (2S)-2-isopropylmalate. It participates in amino-acid biosynthesis; L-leucine biosynthesis; L-leucine from 3-methyl-2-oxobutanoate: step 2/4. Its function is as follows. Catalyzes the isomerization between 2-isopropylmalate and 3-isopropylmalate, via the formation of 2-isopropylmaleate. The polypeptide is 3-isopropylmalate dehydratase large subunit 1 (Bradyrhizobium diazoefficiens (strain JCM 10833 / BCRC 13528 / IAM 13628 / NBRC 14792 / USDA 110)).